The primary structure comprises 290 residues: MEWSLTQNKLLAFHRLMRTDKPIGALLLLWPTLWALWVATPGVPQLWILAVFVAGVWLMRAAGCVVNDYADRKFDGHVKRTANRPLPSGAVTEKEARALFVVLVLISFLLVLTLNTMTILLSIAALALAWVYPFMKRYTHLPQVVLGAAFGWSIPMAFAAVSESVPLSCWLMFLANILWAVAYDTQYAMVDRDDDVKIGIKSTAILFGQYDKLIIGILQIGVLALMAIIGELNGLGWGYYWSIVVAGALFVYQQKLIANREREACFKAFMNNNYVGLVLFLGLAMSYWHF.

The next 8 helical transmembrane spans lie at 23–43, 46–66, 99–119, 141–161, 163–183, 213–233, 234–254, and 268–288; these read IGAL…TPGV, LWIL…GCVV, LFVV…TMTI, LPQV…FAAV, ESVP…AVAY, LIIG…GELN, GLGW…VYQQ, and AFMN…MSYW.

Belongs to the UbiA prenyltransferase family. Mg(2+) serves as cofactor.

It localises to the cell inner membrane. The enzyme catalyses all-trans-octaprenyl diphosphate + 4-hydroxybenzoate = 4-hydroxy-3-(all-trans-octaprenyl)benzoate + diphosphate. Its pathway is cofactor biosynthesis; ubiquinone biosynthesis. In terms of biological role, catalyzes the prenylation of para-hydroxybenzoate (PHB) with an all-trans polyprenyl group. Mediates the second step in the final reaction sequence of ubiquinone-8 (UQ-8) biosynthesis, which is the condensation of the polyisoprenoid side chain with PHB, generating the first membrane-bound Q intermediate 3-octaprenyl-4-hydroxybenzoate. The polypeptide is 4-hydroxybenzoate octaprenyltransferase (Escherichia coli (strain SE11)).